The chain runs to 370 residues: Phosphate acyltransferase (370 aa).

This sequence belongs to the PlsX family. As to quaternary structure, homodimer. Probably interacts with PlsY.

Its subcellular location is the cytoplasm. The enzyme catalyses a fatty acyl-[ACP] + phosphate = an acyl phosphate + holo-[ACP]. Its pathway is lipid metabolism; phospholipid metabolism. Functionally, catalyzes the reversible formation of acyl-phosphate (acyl-PO(4)) from acyl-[acyl-carrier-protein] (acyl-ACP). This enzyme utilizes acyl-ACP as fatty acyl donor, but not acyl-CoA. The protein is Phosphate acyltransferase of Paracoccus denitrificans (strain Pd 1222).